A 194-amino-acid chain; its full sequence is MALVPMVVEQTSRGERSYDIFSRLLKERIIFMTGQVEDHMANLIVAQMMFLEAENPEKDIYLYINSPGGVITAGMSIYDTMQFIKPDVSTFCMGQAASMGAFLLAAGAKGKRFCLPNSRVMIHQPLGGFQGQATDIEIHAREILKVKARMNELMAKHTGQPLEVIERDTERDRFLSAPEAVDYGLVDSVLSQRT.

S98 acts as the Nucleophile in catalysis. Residue H123 is part of the active site.

It belongs to the peptidase S14 family. In terms of assembly, fourteen ClpP subunits assemble into 2 heptameric rings which stack back to back to give a disk-like structure with a central cavity, resembling the structure of eukaryotic proteasomes.

It localises to the cytoplasm. The catalysed reaction is Hydrolysis of proteins to small peptides in the presence of ATP and magnesium. alpha-casein is the usual test substrate. In the absence of ATP, only oligopeptides shorter than five residues are hydrolyzed (such as succinyl-Leu-Tyr-|-NHMec, and Leu-Tyr-Leu-|-Tyr-Trp, in which cleavage of the -Tyr-|-Leu- and -Tyr-|-Trp bonds also occurs).. Its function is as follows. Cleaves peptides in various proteins in a process that requires ATP hydrolysis. Has a chymotrypsin-like activity. Plays a major role in the degradation of misfolded proteins. The polypeptide is ATP-dependent Clp protease proteolytic subunit (Sodalis glossinidius (strain morsitans)).